Reading from the N-terminus, the 207-residue chain is Protein N-terminal glutamine amidohydrolase (207 aa).

Active-site residues include Cys30, His83, and Asp99.

The protein belongs to the NTAQ1 family. In terms of assembly, monomer.

The protein resides in the cytoplasm. It is found in the cytosol. Its subcellular location is the nucleus. The catalysed reaction is N-terminal L-glutaminyl-[protein] + H2O = N-terminal L-glutamyl-[protein] + NH4(+). Mediates the side-chain deamidation of N-terminal glutamine residues to glutamate, an important step in N-end rule pathway of protein degradation. Conversion of the resulting N-terminal glutamine to glutamate renders the protein susceptible to arginylation, polyubiquitination and degradation as specified by the N-end rule. Does not act on substrates with internal or C-terminal glutamine and does not act on non-glutamine residues in any position. Does not deaminate acetylated N-terminal glutamine. With the exception of proline, all tested second-position residues on substrate peptides do not greatly influence the activity. In contrast, a proline at position 2, virtually abolishes deamidation of N-terminal glutamine. This Rattus norvegicus (Rat) protein is Protein N-terminal glutamine amidohydrolase (Ntaq1).